The chain runs to 351 residues: Beta-hexosaminidase (351 aa).

Residues aspartate 62, arginine 70, arginine 133, and 163-164 contribute to the substrate site; that span reads KH. Residue histidine 176 is the Proton donor/acceptor of the active site. Aspartate 248 acts as the Nucleophile in catalysis.

The protein belongs to the glycosyl hydrolase 3 family. NagZ subfamily. In terms of assembly, monomer.

The protein resides in the cytoplasm. The catalysed reaction is Hydrolysis of terminal non-reducing N-acetyl-D-hexosamine residues in N-acetyl-beta-D-hexosaminides.. The protein operates within cell wall biogenesis; peptidoglycan recycling. Its function is as follows. Plays a role in peptidoglycan recycling by cleaving the terminal beta-1,4-linked N-acetylglucosamine (GlcNAc) from peptide-linked peptidoglycan fragments, giving rise to free GlcNAc, anhydro-N-acetylmuramic acid and anhydro-N-acetylmuramic acid-linked peptides. The protein is Beta-hexosaminidase of Haemophilus influenzae (strain ATCC 51907 / DSM 11121 / KW20 / Rd).